The primary structure comprises 75 residues: UPF0270 protein Pfl01_4103 (75 aa).

The protein belongs to the UPF0270 family.

This chain is UPF0270 protein Pfl01_4103, found in Pseudomonas fluorescens (strain Pf0-1).